A 429-amino-acid polypeptide reads, in one-letter code: Keratin, type I cytoskeletal 18 (429 aa).

The head stretch occupies residues 2-78 (SYSRSVYSSS…NVNLIGGGQN (77 aa)). The interval 79–114 (EKETMQDLNDRLASYLERVRSLEAANKKLEVQIRQH) is coil 1A. The region spanning 79-389 (EKETMQDLND…RLLEGDGSFD (311 aa)) is the IF rod domain. The tract at residues 115-130 (TEKKGPSKDWSPYYKT) is linker 1. Positions 131–222 (IEDLRKQVFD…KNHQDDVTEL (92 aa)) are coil 1B. The tract at residues 223–246 (QAQVARSAVTVEVDAPKSQDLGKI) is linker 12. The coil 2 stretch occupies residues 247 to 385 (MTELRAQYDG…HTYRRLLEGD (139 aa)). Residues 386 to 429 (GSFDLQDAVPTVTTQTVKKVITTTQRIVDGKVVSESNDTEVLKS) form a tail region.

It belongs to the intermediate filament family. Heterotetramer of two type I and two type II keratins. Keratin-18 associates with keratin-8. Phosphorylated. Post-translationally, proteolytically cleaved by caspases during epithelial cell apoptosis.

Its function is as follows. When phosphorylated, plays a role in filament reorganization. This Xenopus tropicalis (Western clawed frog) protein is Keratin, type I cytoskeletal 18.